The primary structure comprises 241 residues: Carboxy-S-adenosyl-L-methionine synthase (241 aa).

S-adenosyl-L-methionine contacts are provided by residues Tyr-38, 63 to 65, 88 to 89, 116 to 117, Asn-131, and Arg-198; these read GCS, DN, and DI.

Belongs to the class I-like SAM-binding methyltransferase superfamily. Cx-SAM synthase family. In terms of assembly, homodimer.

It catalyses the reaction prephenate + S-adenosyl-L-methionine = carboxy-S-adenosyl-L-methionine + 3-phenylpyruvate + H2O. In terms of biological role, catalyzes the conversion of S-adenosyl-L-methionine (SAM) to carboxy-S-adenosyl-L-methionine (Cx-SAM). The polypeptide is Carboxy-S-adenosyl-L-methionine synthase (Haemophilus influenzae (strain PittEE)).